The primary structure comprises 40 residues: uncharacterized protein (40 aa).

This is an uncharacterized protein from Escherichia coli (Bacteriophage T4).